The sequence spans 231 residues: Cytidylate kinase (231 aa).

Residue 18 to 26 (GPSGTGKSS) participates in ATP binding.

It belongs to the cytidylate kinase family. Type 1 subfamily.

The protein resides in the cytoplasm. It catalyses the reaction CMP + ATP = CDP + ADP. It carries out the reaction dCMP + ATP = dCDP + ADP. In Streptomyces coelicolor (strain ATCC BAA-471 / A3(2) / M145), this protein is Cytidylate kinase.